Here is a 173-residue protein sequence, read N- to C-terminus: 3-hydroxydecanoyl-[acyl-carrier-protein] dehydratase (173 aa).

H71 is an active-site residue.

Belongs to the thioester dehydratase family. FabA subfamily. As to quaternary structure, homodimer.

Its subcellular location is the cytoplasm. It carries out the reaction a (3R)-hydroxyacyl-[ACP] = a (2E)-enoyl-[ACP] + H2O. The catalysed reaction is (3R)-hydroxydecanoyl-[ACP] = (2E)-decenoyl-[ACP] + H2O. The enzyme catalyses (2E)-decenoyl-[ACP] = (3Z)-decenoyl-[ACP]. It functions in the pathway lipid metabolism; fatty acid biosynthesis. In terms of biological role, necessary for the introduction of cis unsaturation into fatty acids. Catalyzes the dehydration of (3R)-3-hydroxydecanoyl-ACP to E-(2)-decenoyl-ACP and then its isomerization to Z-(3)-decenoyl-ACP. Can catalyze the dehydratase reaction for beta-hydroxyacyl-ACPs with saturated chain lengths up to 16:0, being most active on intermediate chain length. This Bradyrhizobium sp. (strain ORS 278) protein is 3-hydroxydecanoyl-[acyl-carrier-protein] dehydratase.